Consider the following 86-residue polypeptide: U15-lycotoxin-Ls1g (86 aa).

A signal peptide spans methionine 1–serine 20. The region spanning aspartate 21–alanine 66 is the WAP domain. Disulfide bonds link cysteine 24-cysteine 54, cysteine 32-cysteine 58, cysteine 41-cysteine 53, cysteine 42-cysteine 80, and cysteine 47-cysteine 62.

The protein belongs to the venom protein 11 family. 01 (wap-1) subfamily. In terms of processing, contains 5 disulfide bonds. Expressed by the venom gland.

The protein resides in the secreted. Its function is as follows. Has antibacterial activity. In Lycosa singoriensis (Wolf spider), this protein is U15-lycotoxin-Ls1g.